The sequence spans 214 residues: Ribonuclease HII (214 aa).

The RNase H type-2 domain maps to 26 to 214 (EIVCGVDEAG…PVREAFDLIR (189 aa)). A divalent metal cation-binding residues include D32, E33, and D124.

The protein belongs to the RNase HII family. Requires Mn(2+) as cofactor. The cofactor is Mg(2+).

It is found in the cytoplasm. The catalysed reaction is Endonucleolytic cleavage to 5'-phosphomonoester.. In terms of biological role, endonuclease that specifically degrades the RNA of RNA-DNA hybrids. The polypeptide is Ribonuclease HII (Burkholderia pseudomallei (strain 668)).